The sequence spans 100 residues: Urease subunit gamma (100 aa).

The protein belongs to the urease gamma subunit family. Heterotrimer of UreA (gamma), UreB (beta) and UreC (alpha) subunits. Three heterotrimers associate to form the active enzyme.

The protein localises to the cytoplasm. It carries out the reaction urea + 2 H2O + H(+) = hydrogencarbonate + 2 NH4(+). Its pathway is nitrogen metabolism; urea degradation; CO(2) and NH(3) from urea (urease route): step 1/1. This chain is Urease subunit gamma, found in Azotobacter vinelandii (strain DJ / ATCC BAA-1303).